A 602-amino-acid polypeptide reads, in one-letter code: Type II restriction enzyme StsI (602 aa).

It carries out the reaction Endonucleolytic cleavage of DNA to give specific double-stranded fragments with terminal 5'-phosphates.. In terms of biological role, an S subtype restriction enzyme that recognizes the double-stranded sequences 5'-GGATG-3' and 3'-CATCC-5' and cleaves respectively 15 bases after G-1 and 14 bases before C-1. In Streptococcus sanguinis, this protein is Type II restriction enzyme StsI (stsIR).